The sequence spans 475 residues: Glutamate--tRNA ligase (475 aa).

The 'HIGH' region signature appears at 8-18; sequence PSPTGTLHIGT. A 'KMSKS' region motif is present at residues 247–251; sequence KLSKR. ATP is bound at residue lysine 250.

It belongs to the class-I aminoacyl-tRNA synthetase family. Glutamate--tRNA ligase type 1 subfamily. In terms of assembly, monomer.

The protein resides in the cytoplasm. It catalyses the reaction tRNA(Glu) + L-glutamate + ATP = L-glutamyl-tRNA(Glu) + AMP + diphosphate. Its function is as follows. Catalyzes the attachment of glutamate to tRNA(Glu) in a two-step reaction: glutamate is first activated by ATP to form Glu-AMP and then transferred to the acceptor end of tRNA(Glu). In Synechococcus sp. (strain RCC307), this protein is Glutamate--tRNA ligase.